A 170-amino-acid chain; its full sequence is Cyclic pyranopterin monophosphate synthase (170 aa).

Residues 89–91 and 125–126 each bind substrate; these read LCH and ME. Residue D140 is part of the active site.

It belongs to the MoaC family. In terms of assembly, homohexamer; trimer of dimers.

It catalyses the reaction (8S)-3',8-cyclo-7,8-dihydroguanosine 5'-triphosphate = cyclic pyranopterin phosphate + diphosphate. It participates in cofactor biosynthesis; molybdopterin biosynthesis. Functionally, catalyzes the conversion of (8S)-3',8-cyclo-7,8-dihydroguanosine 5'-triphosphate to cyclic pyranopterin monophosphate (cPMP). The protein is Cyclic pyranopterin monophosphate synthase of Streptomyces avermitilis (strain ATCC 31267 / DSM 46492 / JCM 5070 / NBRC 14893 / NCIMB 12804 / NRRL 8165 / MA-4680).